Here is a 204-residue protein sequence, read N- to C-terminus: Pyridoxal 5'-phosphate synthase subunit PdxT (204 aa).

52-54 provides a ligand contact to L-glutamine; that stretch reads GES. C84 acts as the Nucleophile in catalysis. L-glutamine-binding positions include R116 and 143-144; that span reads IR. Residues H184 and E186 each act as charge relay system in the active site.

It belongs to the glutaminase PdxT/SNO family. In the presence of PdxS, forms a dodecamer of heterodimers. Only shows activity in the heterodimer.

It catalyses the reaction aldehydo-D-ribose 5-phosphate + D-glyceraldehyde 3-phosphate + L-glutamine = pyridoxal 5'-phosphate + L-glutamate + phosphate + 3 H2O + H(+). The catalysed reaction is L-glutamine + H2O = L-glutamate + NH4(+). It functions in the pathway cofactor biosynthesis; pyridoxal 5'-phosphate biosynthesis. In terms of biological role, catalyzes the hydrolysis of glutamine to glutamate and ammonia as part of the biosynthesis of pyridoxal 5'-phosphate. The resulting ammonia molecule is channeled to the active site of PdxS. The chain is Pyridoxal 5'-phosphate synthase subunit PdxT from Pyrobaculum aerophilum (strain ATCC 51768 / DSM 7523 / JCM 9630 / CIP 104966 / NBRC 100827 / IM2).